The following is a 339-amino-acid chain: Putative pectinesterase 10 (339 aa).

Positions 1-28 are cleaved as a signal peptide; the sequence is MKGVTIHNFCYSYFKVCLLVMSLAYGSA. N112 carries an N-linked (GlcNAc...) asparagine glycan. T116 contacts substrate. The Proton donor role is filled by D169. D190 (nucleophile) is an active-site residue. Substrate contacts are provided by R252 and W254. N322 carries N-linked (GlcNAc...) asparagine glycosylation.

Belongs to the pectinesterase family. Expressed in siliques.

It localises to the secreted. The protein localises to the cell wall. The catalysed reaction is [(1-&gt;4)-alpha-D-galacturonosyl methyl ester](n) + n H2O = [(1-&gt;4)-alpha-D-galacturonosyl](n) + n methanol + n H(+). Its pathway is glycan metabolism; pectin degradation; 2-dehydro-3-deoxy-D-gluconate from pectin: step 1/5. In terms of biological role, acts in the modification of cell walls via demethylesterification of cell wall pectin. The polypeptide is Putative pectinesterase 10 (PME10) (Arabidopsis thaliana (Mouse-ear cress)).